The chain runs to 406 residues: Phosphopentomutase (406 aa).

6 residues coordinate Mn(2+): Asp10, Asp305, His310, Asp346, His347, and His358.

It belongs to the phosphopentomutase family. Requires Mn(2+) as cofactor.

The protein localises to the cytoplasm. The catalysed reaction is 2-deoxy-alpha-D-ribose 1-phosphate = 2-deoxy-D-ribose 5-phosphate. It catalyses the reaction alpha-D-ribose 1-phosphate = D-ribose 5-phosphate. The protein operates within carbohydrate degradation; 2-deoxy-D-ribose 1-phosphate degradation; D-glyceraldehyde 3-phosphate and acetaldehyde from 2-deoxy-alpha-D-ribose 1-phosphate: step 1/2. Isomerase that catalyzes the conversion of deoxy-ribose 1-phosphate (dRib-1-P) and ribose 1-phosphate (Rib-1-P) to deoxy-ribose 5-phosphate (dRib-5-P) and ribose 5-phosphate (Rib-5-P), respectively. This is Phosphopentomutase from Rhizobium meliloti (strain 1021) (Ensifer meliloti).